The following is a 72-amino-acid chain: NADH dehydrogenase [ubiquinone] 1 beta subcomplex subunit 3-A (72 aa).

A helical transmembrane segment spans residues 31-48; that stretch reads ALPGIGIGVGAFCVYLVG.

This sequence belongs to the complex I NDUFB3 subunit family. As to quaternary structure, complex I is composed of at least 49 different subunits.

The protein resides in the mitochondrion inner membrane. In terms of biological role, accessory subunit of the mitochondrial membrane respiratory chain NADH dehydrogenase (Complex I), that is believed not to be involved in catalysis. Complex I functions in the transfer of electrons from NADH to the respiratory chain. The immediate electron acceptor for the enzyme is believed to be ubiquinone. The chain is NADH dehydrogenase [ubiquinone] 1 beta subcomplex subunit 3-A from Arabidopsis thaliana (Mouse-ear cress).